The chain runs to 615 residues: Elongation factor 4 (615 aa).

In terms of domain architecture, tr-type G spans 17–198 (ASIRNFCIIA…RVSRTIPAPV (182 aa)). Residues 29–34 (DHGKST) and 145–148 (NKID) each bind GTP.

This sequence belongs to the TRAFAC class translation factor GTPase superfamily. Classic translation factor GTPase family. LepA subfamily.

It is found in the cell membrane. The enzyme catalyses GTP + H2O = GDP + phosphate + H(+). In terms of biological role, required for accurate and efficient protein synthesis under certain stress conditions. May act as a fidelity factor of the translation reaction, by catalyzing a one-codon backward translocation of tRNAs on improperly translocated ribosomes. Back-translocation proceeds from a post-translocation (POST) complex to a pre-translocation (PRE) complex, thus giving elongation factor G a second chance to translocate the tRNAs correctly. Binds to ribosomes in a GTP-dependent manner. The polypeptide is Elongation factor 4 (Clavibacter michiganensis subsp. michiganensis (strain NCPPB 382)).